Consider the following 272-residue polypeptide: Indole-3-glycerol phosphate synthase (272 aa).

Belongs to the TrpC family.

It carries out the reaction 1-(2-carboxyphenylamino)-1-deoxy-D-ribulose 5-phosphate + H(+) = (1S,2R)-1-C-(indol-3-yl)glycerol 3-phosphate + CO2 + H2O. It participates in amino-acid biosynthesis; L-tryptophan biosynthesis; L-tryptophan from chorismate: step 4/5. This chain is Indole-3-glycerol phosphate synthase, found in Paenarthrobacter aurescens (strain TC1).